Reading from the N-terminus, the 308-residue chain is Protein translocase subunit SecF (308 aa).

A run of 6 helical transmembrane segments spans residues 23–42 (VSYS…IGIY), 140–160 (IEAG…YIGV), 164–184 (WYFG…ALGF), 194–214 (LSTI…SVVI), 246–266 (ILTV…GGKA), and 272–292 (VLVF…SAPI).

This sequence belongs to the SecD/SecF family. SecF subfamily. As to quaternary structure, forms a complex with SecD. Part of the essential Sec protein translocation apparatus which comprises SecA, SecYEG and auxiliary proteins SecDF-YajC and YidC.

The protein localises to the cell inner membrane. Functionally, part of the Sec protein translocase complex. Interacts with the SecYEG preprotein conducting channel. SecDF uses the proton motive force (PMF) to complete protein translocation after the ATP-dependent function of SecA. The chain is Protein translocase subunit SecF from Rickettsia typhi (strain ATCC VR-144 / Wilmington).